A 156-amino-acid polypeptide reads, in one-letter code: Small ribosomal subunit protein uS7 (156 aa).

Belongs to the universal ribosomal protein uS7 family. As to quaternary structure, part of the 30S ribosomal subunit. Contacts proteins S9 and S11.

In terms of biological role, one of the primary rRNA binding proteins, it binds directly to 16S rRNA where it nucleates assembly of the head domain of the 30S subunit. Is located at the subunit interface close to the decoding center, probably blocks exit of the E-site tRNA. This chain is Small ribosomal subunit protein uS7, found in Clostridium kluyveri (strain NBRC 12016).